A 213-amino-acid chain; its full sequence is MGAGALGVVAMVAAAVVVAMAGANSEGDALSALRRSLRDPGGVLQSWDPTLVNPCTWFHVTCDRDNRVTRLDLGNLNLSGHLVPELGKLDHLQYLELYKNNIQGTIPSELGNLKNLISLDLYKNNISGTIPPTLGKLTSLVFLRLNGNRLTGPIPRELAGISSLKVVDVSSNDLCGTIPTSGPFEHIPLSNFEKNPRLEGPELQGLAVYDTNC.

The signal sequence occupies residues 1–21 (MGAGALGVVAMVAAAVVVAMA). 4 LRR repeats span residues 90 to 113 (DHLQYLELYKNNIQGTIPSELGNL), 115 to 137 (NLISLDLYKNNISGTIPPTLGKL), 138 to 161 (TSLVFLRLNGNRLTGPIPRELAGI), and 163 to 186 (SLKVVDVSSNDLCGTIPTSGPFEH).

In terms of assembly, interacts with HIR1.

The protein resides in the early endosome membrane. It localises to the late endosome membrane. The protein localises to the cell membrane. Functionally, involved in plant defense response. The polypeptide is Leucine-rich repeat protein 1 (Oryza sativa subsp. indica (Rice)).